We begin with the raw amino-acid sequence, 545 residues long: MTHFIFVTGGVVSSLGKGISAASVAALLEARGLKVTMVKMDPYINVDPGTMSPFQHGEVFVTEDGAETDLDLGYYERFLRRAKMTKLNNFTSGRVYQDVLNKERRGDYLGGTVQVIPHITDNIKERVLRAGEGYDVAIVEIGGTVGDIESLPFMESVRQLMVELGHKRTMLMHLTLLPYIKSAAELKTKPTQHSVKELLSIGIQPDILICRTEYDVDADTKRKIALFTNVEARAVVVCKDAKTIYQIPRGFYEQNVDDLICERFGFTDLPEADLTDWDNVVEALLNPEYTVRVAMVGKYVELPDAYKSVNEALLHAGIKNRVKVQIDYVNAEELESQDVSILKTADAILVPGGFGERGTEGKMKAIQYARENSIPFLGICLGMQLAVIEYARHVAGMPEASSTEFNRSTKYPLIGLITEWLDERGELQQRSLESDLGGTMRLGAQKSELVEGTKTREVYGKAEITERHRHRYEMNNRFIEAIEQAGMKISGYSSAQHLVETVEIPEHPWFIAVQFHPEFTSSPRDGHPLFASFIDAAKTQHQKSK.

The amidoligase domain stretch occupies residues 1–266 (MTHFIFVTGG…DDLICERFGF (266 aa)). Ser-13 provides a ligand contact to CTP. Ser-13 lines the UTP pocket. ATP is bound by residues 14-19 (SLGKGI) and Asp-71. Residues Asp-71 and Glu-140 each coordinate Mg(2+). Residues 147–149 (DIE), 187–192 (KTKPTQ), and Lys-223 contribute to the CTP site. UTP is bound by residues 187–192 (KTKPTQ) and Lys-223. ATP is bound at residue 239–241 (KDA). Positions 292 to 543 (RVAMVGKYVE…IDAAKTQHQK (252 aa)) constitute a Glutamine amidotransferase type-1 domain. Gly-353 is a binding site for L-glutamine. Catalysis depends on Cys-380, which acts as the Nucleophile; for glutamine hydrolysis. L-glutamine-binding positions include 381-384 (LGMQ), Glu-404, and Arg-471. Active-site residues include His-516 and Glu-518.

The protein belongs to the CTP synthase family. As to quaternary structure, homotetramer.

The catalysed reaction is UTP + L-glutamine + ATP + H2O = CTP + L-glutamate + ADP + phosphate + 2 H(+). It catalyses the reaction L-glutamine + H2O = L-glutamate + NH4(+). The enzyme catalyses UTP + NH4(+) + ATP = CTP + ADP + phosphate + 2 H(+). The protein operates within pyrimidine metabolism; CTP biosynthesis via de novo pathway; CTP from UDP: step 2/2. Its activity is regulated as follows. Allosterically activated by GTP, when glutamine is the substrate; GTP has no effect on the reaction when ammonia is the substrate. The allosteric effector GTP functions by stabilizing the protein conformation that binds the tetrahedral intermediate(s) formed during glutamine hydrolysis. Inhibited by the product CTP, via allosteric rather than competitive inhibition. In terms of biological role, catalyzes the ATP-dependent amination of UTP to CTP with either L-glutamine or ammonia as the source of nitrogen. Regulates intracellular CTP levels through interactions with the four ribonucleotide triphosphates. This is CTP synthase from Acinetobacter baumannii (strain ACICU).